A 573-amino-acid polypeptide reads, in one-letter code: Maestro heat-like repeat-containing protein family member 9 (573 aa).

HEAT repeat units lie at residues 118–155, 252–289, 292–328, 357–394, and 418–458; these read LYKL…FTVT, PLLT…FHAE, TMVS…TSPK, SVAP…ITNL, and QYFP…LLNC.

The polypeptide is Maestro heat-like repeat-containing protein family member 9 (MROH9) (Homo sapiens (Human)).